The chain runs to 148 residues: Putative FAD-linked sulfhydryl oxidase 096R (148 aa).

Residues 1-103 (MSIDPKLWGN…LAAKTVFQRY (103 aa)) form the ERV/ALR sulfhydryl oxidase domain. A disulfide bond links Cys-48 and Cys-51. A helical transmembrane segment spans residues 122–142 (WSPWLTTALAVILVVVVAGIG).

The protein belongs to the IIV-6 347L family. Requires FAD as cofactor.

The protein resides in the membrane. It catalyses the reaction 2 R'C(R)SH + O2 = R'C(R)S-S(R)CR' + H2O2. Functionally, FAD-dependent sulfhydryl oxidase that catalyzes disulfide bond formation. The protein is Putative FAD-linked sulfhydryl oxidase 096R of Aedes vexans (Inland floodwater mosquito).